The primary structure comprises 121 residues: uncharacterized protein (121 aa).

The interval 101-121 is disordered; it reads TVVKKEDVRESPVDTFMENAT. The span at 102–112 shows a compositional bias: basic and acidic residues; it reads VVKKEDVRESP.

This is an uncharacterized protein from Schizosaccharomyces pombe (strain 972 / ATCC 24843) (Fission yeast).